Reading from the N-terminus, the 392-residue chain is Chalcone synthase (392 aa).

Residue Cys-165 is part of the active site.

This sequence belongs to the thiolase-like superfamily. Chalcone/stilbene synthases family.

The enzyme catalyses (E)-4-coumaroyl-CoA + 3 malonyl-CoA + 3 H(+) = 2',4,4',6'-tetrahydroxychalcone + 3 CO2 + 4 CoA. The protein operates within secondary metabolite biosynthesis; flavonoid biosynthesis. Its function is as follows. The primary product of this enzyme is 4,2',4',6'-tetrahydroxychalcone (also termed naringenin-chalcone or chalcone) which can under specific conditions spontaneously isomerize into naringenin. This chain is Chalcone synthase (CHS), found in Persea americana (Avocado).